The primary structure comprises 481 residues: MIQGTTSDAGKSTLVAGLCRIAHRAGVRVAPFKPQNMALNSAVTADGGEIGRAQALQAQAAGLAPTVDMNPVLLKPNSDTGAQVIIHGRPRGDLNARAYHDYKPTAMAAVLASHGRLRAQYDLVLVEGAGSPAEVNLRARDIANMGFAEAVDCPVVLVADIDRGGVFAHLVGTLACLSESERARVTGFVINRFRGDLSLLTPGLDWLTAQTGKPVFGVLPYLQGLHLDAEDAVQTAQSAASGEVLRVVIPVLPRISNHTDFDALRAHPQVDVRMVGPGRPIPPADLVILPGSKSVQADLAWLRAHGWDAAIARHLRYGGKLIGICGGMQMLGRRLRDPLGLEGRPGSLDGLGYLDFETTLAPAKQLRQVRGTLADGGAALAGYEIHMGVTEGPALARPAVRLDDGRTDGAVSADGQILATYLHGLFDAPEACRALLAWAGVREARAQDYAALREASLERLADTLRAHLDLPALFASLAVRG.

The GATase cobBQ-type domain maps to 244–431 (VLRVVIPVLP…LHGLFDAPEA (188 aa)). Catalysis depends on cysteine 325, which acts as the Nucleophile. The active site involves histidine 423.

It belongs to the CobB/CobQ family. CobQ subfamily.

It functions in the pathway cofactor biosynthesis; adenosylcobalamin biosynthesis. Its function is as follows. Catalyzes amidations at positions B, D, E, and G on adenosylcobyrinic A,C-diamide. NH(2) groups are provided by glutamine, and one molecule of ATP is hydrogenolyzed for each amidation. In Ralstonia nicotianae (strain ATCC BAA-1114 / GMI1000) (Ralstonia solanacearum), this protein is Cobyric acid synthase.